Consider the following 231-residue polypeptide: Pro-thyrotropin-releasing hormone (231 aa).

An N-terminal signal peptide occupies residues 1–22 (MRAACVIILASLTVFMSPGLQC). The segment at 50-139 (TQTEDENHGD…PTAQSELAKR (90 aa)) is disordered. The segment covering 54–70 (DENHGDGEQTEWLEKRQ) has biased composition (basic and acidic residues). The residue at position 70 (Gln-70) is a Pyrrolidone carboxylic acid. At Pro-72 the chain carries Proline amide. Gln-76 is subject to Pyrrolidone carboxylic acid. Pro-78 is subject to Proline amide. Pyrrolidone carboxylic acid is present on Gln-97. Proline amide is present on Pro-99. A Pyrrolidone carboxylic acid modification is found at Gln-114. A Proline amide modification is found at Pro-116. Gln-140 bears the Pyrrolidone carboxylic acid mark. A Proline amide modification is found at Pro-142. Gln-154 carries the pyrrolidone carboxylic acid modification. Pro-156 carries the post-translational modification Proline amide. At Gln-175 the chain carries Pyrrolidone carboxylic acid. Pro-177 carries the proline amide modification. The tract at residues 206–231 (SRAEEKRQHPGKRFALEDELTEQESL) is disordered. The residue at position 213 (Gln-213) is a Pyrrolidone carboxylic acid. At Pro-215 the chain carries Proline amide. Residues 222–231 (EDELTEQESL) show a composition bias toward acidic residues.

It belongs to the TRH family.

It localises to the secreted. Functions as a regulator of the biosynthesis of TSH in the anterior pituitary gland and as a neurotransmitter/ neuromodulator in the central and peripheral nervous systems. The polypeptide is Pro-thyrotropin-releasing hormone (trh) (Carassius auratus (Goldfish)).